The chain runs to 984 residues: Respiratory nitrate reductase subunit alpha (984 aa).

Residues 1-43 (MSRNDASQLDDGETTAESPPDDQANDAPEVGDPPGDPVDADSG) are disordered. Acidic residues predominate over residues 8-24 (QLDDGETTAESPPDDQA). The region spanning 103–167 (DSVSRSTHSV…CYTDYVNADQ (65 aa)) is the 4Fe-4S Mo/W bis-MGD-type domain. [4Fe-4S] cluster-binding residues include H110, C114, C118, and C153. D249 contributes to the Mo-bis(molybdopterin guanine dinucleotide) binding site.

The protein belongs to the prokaryotic molybdopterin-containing oxidoreductase family. In terms of assembly, probable multiprotein complex; a catalytic heterodimer of an alpha and beta chain is proposed to associate with additional subunits involved in membrane attachment and electron transfer. Requires [4Fe-4S] cluster as cofactor. The cofactor is Mo-bis(molybdopterin guanine dinucleotide). Exported by the Tat system.

It localises to the cell membrane. The enzyme catalyses nitrate + a quinol = a quinone + nitrite + H2O. With respect to regulation, inhibited by cyanide, azide and antimycin A. Enzyme stability is not dependent on salt concentration. Its function is as follows. The respiratory membrane-bound nitrate reductase enzyme complex plays a role in generation of metabolic energy by using nitrate as a terminal electron acceptor during anaerobic conditions. The alpha chain is the actual site of nitrate reduction. This Haloferax mediterranei (strain ATCC 33500 / DSM 1411 / JCM 8866 / NBRC 14739 / NCIMB 2177 / R-4) (Halobacterium mediterranei) protein is Respiratory nitrate reductase subunit alpha (narG).